Here is a 352-residue protein sequence, read N- to C-terminus: Ferrochelatase (352 aa).

The Fe cation site is built by His-222 and Glu-303.

It belongs to the ferrochelatase family.

It localises to the cytoplasm. The enzyme catalyses heme b + 2 H(+) = protoporphyrin IX + Fe(2+). Its pathway is porphyrin-containing compound metabolism; protoheme biosynthesis; protoheme from protoporphyrin-IX: step 1/1. Functionally, catalyzes the ferrous insertion into protoporphyrin IX. This is Ferrochelatase from Brucella melitensis biotype 2 (strain ATCC 23457).